The sequence spans 344 residues: Fructose-1,6-bisphosphatase class 1 (344 aa).

Positions 90, 109, 111, and 112 each coordinate Mg(2+). Substrate-binding positions include 112 to 115 (DGSS) and asparagine 200. Glutamate 271 provides a ligand contact to Mg(2+).

This sequence belongs to the FBPase class 1 family. Homotetramer. Requires Mg(2+) as cofactor.

It is found in the cytoplasm. The catalysed reaction is beta-D-fructose 1,6-bisphosphate + H2O = beta-D-fructose 6-phosphate + phosphate. Its pathway is carbohydrate biosynthesis; gluconeogenesis. In Nitrobacter vulgaris, this protein is Fructose-1,6-bisphosphatase class 1.